The chain runs to 59 residues: Large ribosomal subunit protein uL30 (59 aa).

It belongs to the universal ribosomal protein uL30 family. Part of the 50S ribosomal subunit.

In Syntrophotalea carbinolica (strain DSM 2380 / NBRC 103641 / GraBd1) (Pelobacter carbinolicus), this protein is Large ribosomal subunit protein uL30.